The sequence spans 342 residues: Methionine import ATP-binding protein MetN 2 (342 aa).

The ABC transporter domain maps to 2 to 241; sequence ISIEGLSKVF…PKQLVTRKFV (240 aa). 38–45 is an ATP binding site; it reads GYSGAGKS.

It belongs to the ABC transporter superfamily. Methionine importer (TC 3.A.1.24) family. In terms of assembly, the complex is composed of two ATP-binding proteins (MetN), two transmembrane proteins (MetI) and a solute-binding protein (MetQ).

It is found in the cell membrane. It carries out the reaction L-methionine(out) + ATP + H2O = L-methionine(in) + ADP + phosphate + H(+). The enzyme catalyses D-methionine(out) + ATP + H2O = D-methionine(in) + ADP + phosphate + H(+). Functionally, part of the ABC transporter complex MetNIQ involved in methionine import. Responsible for energy coupling to the transport system. This Oceanobacillus iheyensis (strain DSM 14371 / CIP 107618 / JCM 11309 / KCTC 3954 / HTE831) protein is Methionine import ATP-binding protein MetN 2.